The following is a 176-amino-acid chain: Japanin-like-RS (176 aa).

Positions 1–24 (MKVLLCLVCSFYIIVSSITTMTTG) are cleaved as a signal peptide. 2 disulfide bridges follow: Cys-52–Cys-174 and Cys-138–Cys-162. Asn-155 carries an N-linked (GlcNAc...) asparagine glycan.

Belongs to the calycin superfamily. Lipocalin family. As to quaternary structure, homodimer; non-disulfide-linked. Each monomer accommodates one molecule of cholesterol in a pocket. As to expression, expressed in salivary glands.

The protein resides in the secreted. Its function is as follows. Salivary tick protein that modulates host immune response. This protein blocks dendritic cell (DC) differentiation from monocytes. In addition, it inhibits up-regulation of costimulatory molecules and pro-inflammatory cytokines in response to stimuli and promotes up-regulation of co-inhibitory molecules and the anti-inflammatory cytokine interleukin-10. It has a pocket to accomodate cholesterol, which may have immune-modulatory roles, either directly or through interactions with the host gut microbiota. This is Japanin-like-RS from Rhipicephalus sanguineus (Brown dog tick).